Here is a 260-residue protein sequence, read N- to C-terminus: UPF0328 protein ECU07_1870/ECU10_0030 (260 aa).

Belongs to the UPF0328 family.

In Encephalitozoon cuniculi (strain GB-M1) (Microsporidian parasite), this protein is UPF0328 protein ECU07_1870/ECU10_0030.